The following is a 216-amino-acid chain: Redox-sensing transcriptional repressor Rex (216 aa).

Residues K15–I54 constitute a DNA-binding region (H-T-H motif). G89–G94 is an NAD(+) binding site.

This sequence belongs to the transcriptional regulatory Rex family. As to quaternary structure, homodimer.

It is found in the cytoplasm. Modulates transcription in response to changes in cellular NADH/NAD(+) redox state. The protein is Redox-sensing transcriptional repressor Rex of Rubrobacter xylanophilus (strain DSM 9941 / JCM 11954 / NBRC 16129 / PRD-1).